The sequence spans 367 residues: Alanine racemase (367 aa).

The active-site Proton acceptor; specific for D-alanine is the Lys-34. The residue at position 34 (Lys-34) is an N6-(pyridoxal phosphate)lysine. Substrate is bound at residue Arg-131. Tyr-258 (proton acceptor; specific for L-alanine) is an active-site residue. Met-306 is a substrate binding site.

The protein belongs to the alanine racemase family. Requires pyridoxal 5'-phosphate as cofactor.

The enzyme catalyses L-alanine = D-alanine. It functions in the pathway amino-acid biosynthesis; D-alanine biosynthesis; D-alanine from L-alanine: step 1/1. Functionally, catalyzes the interconversion of L-alanine and D-alanine. May also act on other amino acids. This Corynebacterium efficiens (strain DSM 44549 / YS-314 / AJ 12310 / JCM 11189 / NBRC 100395) protein is Alanine racemase (alr).